A 486-amino-acid chain; its full sequence is Achaete-scute complex protein T8 (486 aa).

Disordered stretches follow at residues 1–26 (MAALSFSPSPPPKENPKENPNPGIKT) and 75–158 (AAST…LPLP). Over residues 75–86 (AASTTNTTPISS) the composition is skewed to polar residues. Residues 159 to 223 (QAVARRNARE…RMAVEYIRSL (65 aa)) enclose the bHLH domain.

As to quaternary structure, efficient DNA binding requires dimerization with another bHLH protein. In terms of tissue distribution, l(1)SC, SC and AC strongly label the presumptive stomatogastric nervous system, while ASE is more prominent in the presumptive procephalic lobe.

Its function is as follows. Involved in the determination of the neuronal precursors of optic lobes in the central nervous system. This chain is Achaete-scute complex protein T8 (ase), found in Drosophila melanogaster (Fruit fly).